A 306-amino-acid polypeptide reads, in one-letter code: Methionyl-tRNA formyltransferase (306 aa).

105–108 (SLLP) is a binding site for (6S)-5,6,7,8-tetrahydrofolate.

This sequence belongs to the Fmt family.

The enzyme catalyses L-methionyl-tRNA(fMet) + (6R)-10-formyltetrahydrofolate = N-formyl-L-methionyl-tRNA(fMet) + (6S)-5,6,7,8-tetrahydrofolate + H(+). In terms of biological role, attaches a formyl group to the free amino group of methionyl-tRNA(fMet). The formyl group appears to play a dual role in the initiator identity of N-formylmethionyl-tRNA by promoting its recognition by IF2 and preventing the misappropriation of this tRNA by the elongation apparatus. The chain is Methionyl-tRNA formyltransferase from Rubrobacter xylanophilus (strain DSM 9941 / JCM 11954 / NBRC 16129 / PRD-1).